The following is a 119-amino-acid chain: MAMLLGASVLILWLQPDWVNSQQKNDDQQVKQNSPSLSVQEGRISILNCDYTNSMFDYFLWYKKYPAEGPTFLISISSIKDKNEDGRFTVFLNKSAKHLSLHIVPSQPGDSAVYFCAAS.

An N-terminal signal peptide occupies residues 1–21 (MAMLLGASVLILWLQPDWVNS). Residues 22–119 (QQKNDDQQVK…DSAVYFCAAS (98 aa)) enclose the Ig-like domain. An intrachain disulfide couples Cys-49 to Cys-116. Residue Asn-93 is glycosylated (N-linked (GlcNAc...) asparagine).

In terms of assembly, alpha-beta TR is a heterodimer composed of an alpha and beta chain; disulfide-linked. The alpha-beta TR is associated with the transmembrane signaling CD3 coreceptor proteins to form the TR-CD3 (TcR or TCR). The assembly of alpha-beta TR heterodimers with CD3 occurs in the endoplasmic reticulum where a single alpha-beta TR heterodimer associates with one CD3D-CD3E heterodimer, one CD3G-CD3E heterodimer and one CD247 homodimer forming a stable octameric structure. CD3D-CD3E and CD3G-CD3E heterodimers preferentially associate with TR alpha and TR beta chains, respectively. The association of the CD247 homodimer is the last step of TcR assembly in the endoplasmic reticulum and is required for transport to the cell surface.

The protein localises to the cell membrane. Functionally, v region of the variable domain of T cell receptor (TR) alpha chain that participates in the antigen recognition. Alpha-beta T cell receptors are antigen specific receptors which are essential to the immune response and are present on the cell surface of T lymphocytes. Recognize peptide-major histocompatibility (MH) (pMH) complexes that are displayed by antigen presenting cells (APC), a prerequisite for efficient T cell adaptive immunity against pathogens. Binding of alpha-beta TR to pMH complex initiates TR-CD3 clustering on the cell surface and intracellular activation of LCK that phosphorylates the ITAM motifs of CD3G, CD3D, CD3E and CD247 enabling the recruitment of ZAP70. In turn ZAP70 phosphorylates LAT, which recruits numerous signaling molecules to form the LAT signalosome. The LAT signalosome propagates signal branching to three major signaling pathways, the calcium, the mitogen-activated protein kinase (MAPK) kinase and the nuclear factor NF-kappa-B (NF-kB) pathways, leading to the mobilization of transcription factors that are critical for gene expression and essential for T cell growth and differentiation. The T cell repertoire is generated in the thymus, by V-(D)-J rearrangement. This repertoire is then shaped by intrathymic selection events to generate a peripheral T cell pool of self-MH restricted, non-autoaggressive T cells. Post-thymic interaction of alpha-beta TR with the pMH complexes shapes TR structural and functional avidity. This is T cell receptor alpha variable 29/delta variable 5 from Homo sapiens (Human).